The sequence spans 469 residues: Putative multidrug resistance protein MdtD (469 aa).

The next 13 helical transmembrane spans lie at leucine 8–alanine 28, serine 45–alanine 65, valine 68–cysteine 88, valine 102–isoleucine 122, phenylalanine 134–valine 154, tryptophan 161–methionine 181, phenylalanine 191–aspartate 211, glycine 215–alanine 235, leucine 263–phenylalanine 283, isoleucine 286–serine 306, leucine 338–phenylalanine 358, methionine 392–phenylalanine 412, and serine 426–phenylalanine 446.

This sequence belongs to the major facilitator superfamily. TCR/Tet family.

The protein resides in the cell inner membrane. The polypeptide is Putative multidrug resistance protein MdtD (Yersinia enterocolitica serotype O:8 / biotype 1B (strain NCTC 13174 / 8081)).